The sequence spans 86 residues: Large ribosomal subunit protein bL31B (86 aa).

It belongs to the bacterial ribosomal protein bL31 family. Type B subfamily. In terms of assembly, part of the 50S ribosomal subunit.

The chain is Large ribosomal subunit protein bL31B from Vibrio vulnificus (strain YJ016).